A 419-amino-acid chain; its full sequence is Synaptic vesicle membrane protein VAT-1 homolog-like (419 aa).

Basic and acidic residues predominate over residues 1–25 (MAKEGVEKAEETEQMIEKEAGKEPA). 2 disordered regions span residues 1-36 (MAKEGVEKAEETEQMIEKEAGKEPAEGGGGDGSHRL) and 384-419 (PTPLMANDSTETSEAGEEEEDHEGDSENKERMPFIQ). S392 carries the post-translational modification Phosphoserine. Phosphothreonine is present on residues T393 and T395. Residue S396 is modified to Phosphoserine. Over residues 397 to 407 (EAGEEEEDHEG) the composition is skewed to acidic residues. The span at 408-419 (DSENKERMPFIQ) shows a compositional bias: basic and acidic residues.

It belongs to the zinc-containing alcohol dehydrogenase family. Quinone oxidoreductase subfamily. Detected in skin fibroblasts.

This chain is Synaptic vesicle membrane protein VAT-1 homolog-like (VAT1L), found in Homo sapiens (Human).